We begin with the raw amino-acid sequence, 109 residues long: Class I hydrophobin 2 (109 aa).

The N-terminal stretch at 1–18 (MQFKLAFVSIALATLAVA) is a signal peptide. 4 cysteine pairs are disulfide-bonded: Cys30–Cys90, Cys37–Cys84, Cys38–Cys71, and Cys91–Cys104.

This sequence belongs to the fungal hydrophobin family. As to quaternary structure, self-assembles to form functional amyloid fibrils called rodlets. Self-assembly into fibrillar rodlets occurs spontaneously at hydrophobic:hydrophilic interfaces and the rodlets further associate laterally to form amphipathic monolayers.

It is found in the secreted. Its subcellular location is the cell wall. Its function is as follows. Aerial growth, conidiation, and dispersal of filamentous fungi in the environment rely upon a capability of their secreting small amphipathic proteins called hydrophobins (HPBs) with low sequence identity. Class I can self-assemble into an outermost layer of rodlet bundles on aerial cell surfaces, conferring cellular hydrophobicity that supports fungal growth, development and dispersal; whereas Class II form highly ordered films at water-air interfaces through intermolecular interactions but contribute nothing to the rodlet structure. Hyd2 is a class I hydrophobin that may allow the dikaryotic mycelia to attach to the hydrophobic surface of the substrate. Higher expression in dikaryotic mycelia than in monokaryotic mycelia indicates that dikaryons require more hyd2 hydrophobin than the monokaryons, presumably for a higher rate of hyphal growth. This is Class I hydrophobin 2 from Lentinula edodes (Shiitake mushroom).